The sequence spans 404 residues: Phosphopentomutase (404 aa).

Mn(2+)-binding residues include Asp-10, Asp-303, His-308, Asp-344, His-345, and His-356.

Belongs to the phosphopentomutase family. Mn(2+) serves as cofactor.

It is found in the cytoplasm. The catalysed reaction is 2-deoxy-alpha-D-ribose 1-phosphate = 2-deoxy-D-ribose 5-phosphate. It carries out the reaction alpha-D-ribose 1-phosphate = D-ribose 5-phosphate. Its pathway is carbohydrate degradation; 2-deoxy-D-ribose 1-phosphate degradation; D-glyceraldehyde 3-phosphate and acetaldehyde from 2-deoxy-alpha-D-ribose 1-phosphate: step 1/2. Isomerase that catalyzes the conversion of deoxy-ribose 1-phosphate (dRib-1-P) and ribose 1-phosphate (Rib-1-P) to deoxy-ribose 5-phosphate (dRib-5-P) and ribose 5-phosphate (Rib-5-P), respectively. This Shewanella baltica (strain OS223) protein is Phosphopentomutase.